The following is a 329-amino-acid chain: MVSQLTDAFARTFYYLRLSVTDVCNFRCTYCLPGGYRPDSHGAKRFLSCDEIRRISHAFAALGTEKVRLTGGEPTLRRDFCDIVAAVRENSAIRTLAVTTNGYRMARDVGAWRDAGLTAINVSVDSLDARQFHAITGEDRFAQVMAGIDAAFDAGFGRIKVNTVLMRGVNDGSLQAFLHWIRRRPIQMRFIELMETGDGSELFRRHHVSGATIRTQLLAAGWQRRLPGRSDGPAQVFWHPDYLGEVGLIMPYEKNFCASCNRLRVSAVGNLHLCLFGEQGIALRDLLQEDAQQAALQVRIAAALRHKREGHFLHQGDSGHTQNLSFIGG.

One can recognise a Radical SAM core domain in the interval 8–229; the sequence is AFARTFYYLR…AGWQRRLPGR (222 aa). R17 contacts GTP. Residues C24 and C28 each contribute to the [4Fe-4S] cluster site. Y30 lines the S-adenosyl-L-methionine pocket. C31 provides a ligand contact to [4Fe-4S] cluster. Position 68 (R68) interacts with GTP. G72 provides a ligand contact to S-adenosyl-L-methionine. T99 is a GTP binding site. S-adenosyl-L-methionine is bound at residue S123. K160 provides a ligand contact to GTP. Residue M194 participates in S-adenosyl-L-methionine binding. The [4Fe-4S] cluster site is built by C257 and C260. A GTP-binding site is contributed by 262–264; sequence RLR. A [4Fe-4S] cluster-binding site is contributed by C274.

This sequence belongs to the radical SAM superfamily. MoaA family. As to quaternary structure, monomer and homodimer. [4Fe-4S] cluster is required as a cofactor.

It catalyses the reaction GTP + AH2 + S-adenosyl-L-methionine = (8S)-3',8-cyclo-7,8-dihydroguanosine 5'-triphosphate + 5'-deoxyadenosine + L-methionine + A + H(+). The protein operates within cofactor biosynthesis; molybdopterin biosynthesis. Functionally, catalyzes the cyclization of GTP to (8S)-3',8-cyclo-7,8-dihydroguanosine 5'-triphosphate. This Edwardsiella ictaluri (strain 93-146) protein is GTP 3',8-cyclase.